The primary structure comprises 127 residues: Major sperm protein 19/31/40/45/50/51/53/59/61/65/81/113/142 (127 aa).

Position 2 is an N-acetylalanine (Ala2). Residues 9–126 (DIQTQPGTKI…RRKNLPIEYN (118 aa)) enclose the MSP domain.

In terms of assembly, helical subfilaments are built from MSP dimers; filaments are formed from two subfilaments coiling round one another; and filaments themselves supercoil to produce bundles. Sperm.

It is found in the cell projection. It localises to the pseudopodium. The protein localises to the cytoplasm. The protein resides in the cytoskeleton. Its function is as follows. Central component in molecular interactions underlying sperm crawling. Forms an extensive filament system that extends from sperm villipoda, along the leading edge of the pseudopod. The chain is Major sperm protein 19/31/40/45/50/51/53/59/61/65/81/113/142 (msp-19) from Caenorhabditis elegans.